The primary structure comprises 487 residues: Glutamyl-tRNA(Gln) amidotransferase subunit A (487 aa).

Active-site charge relay system residues include Lys-77 and Ser-152. Ser-176 acts as the Acyl-ester intermediate in catalysis.

The protein belongs to the amidase family. GatA subfamily. In terms of assembly, heterotrimer of A, B and C subunits.

It carries out the reaction L-glutamyl-tRNA(Gln) + L-glutamine + ATP + H2O = L-glutaminyl-tRNA(Gln) + L-glutamate + ADP + phosphate + H(+). In terms of biological role, allows the formation of correctly charged Gln-tRNA(Gln) through the transamidation of misacylated Glu-tRNA(Gln) in organisms which lack glutaminyl-tRNA synthetase. The reaction takes place in the presence of glutamine and ATP through an activated gamma-phospho-Glu-tRNA(Gln). In Lysinibacillus sphaericus (strain C3-41), this protein is Glutamyl-tRNA(Gln) amidotransferase subunit A.